Here is a 453-residue protein sequence, read N- to C-terminus: Chromosomal replication initiator protein DnaA (453 aa).

The tract at residues 1–76 (MSGDAAALWP…LAWRQQLPAV (76 aa)) is domain I, interacts with DnaA modulators. The tract at residues 76 to 115 (VRSVSVRGGVAATERAATLASVPLPTFDAPAAPAANPALL) is domain II. The tract at residues 116–333 (GFDPRLSFDR…GALNKLLAYA (218 aa)) is domain III, AAA+ region. The ATP site is built by G160, G162, K163, and T164. Residues 334–453 (ALTGARIDLM…IAAIRRSLNS (120 aa)) form a domain IV, binds dsDNA region.

This sequence belongs to the DnaA family. As to quaternary structure, oligomerizes as a right-handed, spiral filament on DNA at oriC.

It is found in the cytoplasm. In terms of biological role, plays an essential role in the initiation and regulation of chromosomal replication. ATP-DnaA binds to the origin of replication (oriC) to initiate formation of the DNA replication initiation complex once per cell cycle. Binds the DnaA box (a 9 base pair repeat at the origin) and separates the double-stranded (ds)DNA. Forms a right-handed helical filament on oriC DNA; dsDNA binds to the exterior of the filament while single-stranded (ss)DNA is stabiized in the filament's interior. The ATP-DnaA-oriC complex binds and stabilizes one strand of the AT-rich DNA unwinding element (DUE), permitting loading of DNA polymerase. After initiation quickly degrades to an ADP-DnaA complex that is not apt for DNA replication. Binds acidic phospholipids. This is Chromosomal replication initiator protein DnaA from Sphingopyxis alaskensis (strain DSM 13593 / LMG 18877 / RB2256) (Sphingomonas alaskensis).